A 77-amino-acid polypeptide reads, in one-letter code: PTS system N-acetylglucosamine-specific EIIB component (77 aa).

The region spanning 2-77 (ASKAEKIVAG…PIAAEIEDMM (76 aa)) is the PTS EIIB type-1 domain. Cys-24 serves as the catalytic Phosphocysteine intermediate; for EIIB activity.

The enzyme catalyses N(pros)-phospho-L-histidyl-[protein] + N-acetyl-D-glucosamine(out) = N-acetyl-D-glucosamine 6-phosphate(in) + L-histidyl-[protein]. The phosphoenolpyruvate-dependent sugar phosphotransferase system (sugar PTS), a major carbohydrate active transport system, catalyzes the phosphorylation of incoming sugar substrates concomitantly with their translocation across the cell membrane. This system is involved in N-acetylglucosamine (GlcNAc) transport. This Streptomyces coelicolor (strain ATCC BAA-471 / A3(2) / M145) protein is PTS system N-acetylglucosamine-specific EIIB component.